The following is a 211-amino-acid chain: N-(5'-phosphoribosyl)anthranilate isomerase (211 aa).

Belongs to the TrpF family.

The catalysed reaction is N-(5-phospho-beta-D-ribosyl)anthranilate = 1-(2-carboxyphenylamino)-1-deoxy-D-ribulose 5-phosphate. The protein operates within amino-acid biosynthesis; L-tryptophan biosynthesis; L-tryptophan from chorismate: step 3/5. This Methanococcus maripaludis (strain C6 / ATCC BAA-1332) protein is N-(5'-phosphoribosyl)anthranilate isomerase.